The primary structure comprises 549 residues: Longitudinals lacking protein, isoforms H/M/V (549 aa).

The BTB domain occupies 32–97 (VDCTLAAEGK…MYRGEVNISQ (66 aa)). Disordered regions lie at residues 115 to 200 (LSDN…SSVL) and 228 to 340 (SSGP…ASAS). Composition is skewed to low complexity over residues 162–175 (SGDV…SSSP), 228–251 (SSGP…LTST), 263–293 (TSST…QTTS), and 329–340 (NSATGPNPASAS).

Mostly neuronal.

The protein localises to the nucleus. Functionally, putative transcription factor required for axon growth and guidance in the central and peripheral nervous systems. Repels CNS axons away from the midline by promoting the expression of the midline repellent sli and its receptor robo. The protein is Longitudinals lacking protein, isoforms H/M/V of Drosophila melanogaster (Fruit fly).